A 138-amino-acid chain; its full sequence is Mitochondrial import inner membrane translocase subunit tim-16 (138 aa).

Positions 32-43 are enriched in low complexity; it reads TQQAAARHAAAT. 2 disordered regions span residues 32–58 and 118–138; these read TQQA…NANA and LSRL…NSKE. A compositionally biased stretch (polar residues) spans 44 to 56; the sequence is GQSPSETKENANA. Residues 66–119 are J-like; it reads ESLQILNVKTPLNREDVEKHYEHLFAINDKAKGGTFYLQSKVYRAKERIDEELS.

Belongs to the TIM16/PAM16 family. In terms of assembly, probable component of the PAM complex at least composed of a mitochondrial HSP70 protein, GrpE, tim-44, tim-16 and tim-14. Associates with the TIM23 complex.

The protein resides in the mitochondrion inner membrane. Regulates ATP-dependent protein translocation into the mitochondrial matrix. This Caenorhabditis briggsae protein is Mitochondrial import inner membrane translocase subunit tim-16.